Consider the following 341-residue polypeptide: Glyceraldehyde-3-phosphate dehydrogenase 1 (341 aa).

Residues Arg-13–Ile-14, Asp-35, and Lys-85 each bind NAD(+). Residues Ser-157–Thr-159, Thr-188, Thr-217–Gly-218, and Arg-240 contribute to the D-glyceraldehyde 3-phosphate site. Cys-158 functions as the Nucleophile in the catalytic mechanism. Residue Asn-322 participates in NAD(+) binding.

The protein belongs to the glyceraldehyde-3-phosphate dehydrogenase family. In terms of assembly, homotetramer.

It is found in the cytoplasm. It carries out the reaction D-glyceraldehyde 3-phosphate + phosphate + NAD(+) = (2R)-3-phospho-glyceroyl phosphate + NADH + H(+). It participates in carbohydrate degradation; glycolysis; pyruvate from D-glyceraldehyde 3-phosphate: step 1/5. The protein is Glyceraldehyde-3-phosphate dehydrogenase 1 (gpd-1) of Caenorhabditis elegans.